A 306-amino-acid polypeptide reads, in one-letter code: UDP-3-O-acyl-N-acetylglucosamine deacetylase (306 aa).

Residues histidine 79, histidine 238, and aspartate 242 each coordinate Zn(2+). Catalysis depends on histidine 265, which acts as the Proton donor.

Belongs to the LpxC family. The cofactor is Zn(2+).

It catalyses the reaction a UDP-3-O-[(3R)-3-hydroxyacyl]-N-acetyl-alpha-D-glucosamine + H2O = a UDP-3-O-[(3R)-3-hydroxyacyl]-alpha-D-glucosamine + acetate. Its pathway is glycolipid biosynthesis; lipid IV(A) biosynthesis; lipid IV(A) from (3R)-3-hydroxytetradecanoyl-[acyl-carrier-protein] and UDP-N-acetyl-alpha-D-glucosamine: step 2/6. In terms of biological role, catalyzes the hydrolysis of UDP-3-O-myristoyl-N-acetylglucosamine to form UDP-3-O-myristoylglucosamine and acetate, the committed step in lipid A biosynthesis. The protein is UDP-3-O-acyl-N-acetylglucosamine deacetylase of Hamiltonella defensa subsp. Acyrthosiphon pisum (strain 5AT).